The primary structure comprises 178 residues: Inorganic pyrophosphatase (178 aa).

Substrate is bound by residues K30, R44, and Y56. Mg(2+) is bound by residues D66, D71, and D103. Residue Y140 coordinates substrate.

The protein belongs to the PPase family. In terms of assembly, homohexamer. Mg(2+) is required as a cofactor.

It localises to the cytoplasm. The enzyme catalyses diphosphate + H2O = 2 phosphate + H(+). Functionally, catalyzes the hydrolysis of inorganic pyrophosphate (PPi) forming two phosphate ions. The protein is Inorganic pyrophosphatase of Thermococcus kodakarensis (strain ATCC BAA-918 / JCM 12380 / KOD1) (Pyrococcus kodakaraensis (strain KOD1)).